The sequence spans 289 residues: Phosphatidylglycerol--prolipoprotein diacylglyceryl transferase (289 aa).

Helical transmembrane passes span 13–33, 61–81, and 99–119; these read LGPL…LLGW, FILW…VLFY, and GGMS…LFAM. R144 lines the a 1,2-diacyl-sn-glycero-3-phospho-(1'-sn-glycerol) pocket. The next 2 membrane-spanning stretches (helical) occupy residues 218–238 and 250–270; these read GVVM…LENV and LGLT…LWLI.

The protein belongs to the Lgt family.

The protein resides in the cell inner membrane. It catalyses the reaction L-cysteinyl-[prolipoprotein] + a 1,2-diacyl-sn-glycero-3-phospho-(1'-sn-glycerol) = an S-1,2-diacyl-sn-glyceryl-L-cysteinyl-[prolipoprotein] + sn-glycerol 1-phosphate + H(+). It functions in the pathway protein modification; lipoprotein biosynthesis (diacylglyceryl transfer). Catalyzes the transfer of the diacylglyceryl group from phosphatidylglycerol to the sulfhydryl group of the N-terminal cysteine of a prolipoprotein, the first step in the formation of mature lipoproteins. This Phenylobacterium zucineum (strain HLK1) protein is Phosphatidylglycerol--prolipoprotein diacylglyceryl transferase.